We begin with the raw amino-acid sequence, 355 residues long: DNA polymerase IV (355 aa).

Positions 4-185 (IIHIDMDCYF…LSLGKIPGVG (182 aa)) constitute a UmuC domain. The Mg(2+) site is built by D8 and D103. E104 is an active-site residue.

It belongs to the DNA polymerase type-Y family. In terms of assembly, monomer. It depends on Mg(2+) as a cofactor.

Its subcellular location is the cytoplasm. The catalysed reaction is DNA(n) + a 2'-deoxyribonucleoside 5'-triphosphate = DNA(n+1) + diphosphate. Functionally, poorly processive, error-prone DNA polymerase involved in untargeted mutagenesis. Copies undamaged DNA at stalled replication forks, which arise in vivo from mismatched or misaligned primer ends. These misaligned primers can be extended by PolIV. Exhibits no 3'-5' exonuclease (proofreading) activity. May be involved in translesional synthesis, in conjunction with the beta clamp from PolIII. In Shewanella amazonensis (strain ATCC BAA-1098 / SB2B), this protein is DNA polymerase IV.